The sequence spans 490 residues: Glutamyl-tRNA(Gln) amidotransferase subunit A (490 aa).

Active-site charge relay system residues include Lys80 and Ser155. Ser179 (acyl-ester intermediate) is an active-site residue.

This sequence belongs to the amidase family. GatA subfamily. Heterotrimer of A, B and C subunits.

The enzyme catalyses L-glutamyl-tRNA(Gln) + L-glutamine + ATP + H2O = L-glutaminyl-tRNA(Gln) + L-glutamate + ADP + phosphate + H(+). In terms of biological role, allows the formation of correctly charged Gln-tRNA(Gln) through the transamidation of misacylated Glu-tRNA(Gln) in organisms which lack glutaminyl-tRNA synthetase. The reaction takes place in the presence of glutamine and ATP through an activated gamma-phospho-Glu-tRNA(Gln). This chain is Glutamyl-tRNA(Gln) amidotransferase subunit A, found in Brevibacillus brevis (strain 47 / JCM 6285 / NBRC 100599).